A 116-amino-acid polypeptide reads, in one-letter code: Large ribosomal subunit protein bL21c (116 aa).

Belongs to the bacterial ribosomal protein bL21 family. As to quaternary structure, part of the 50S ribosomal subunit.

The protein localises to the plastid. It is found in the chloroplast. Functionally, this protein binds to 23S rRNA. The protein is Large ribosomal subunit protein bL21c of Marchantia polymorpha (Common liverwort).